We begin with the raw amino-acid sequence, 421 residues long: Protein MucB (421 aa).

One can recognise a UmuC domain in the interval 2 to 187; that stretch reads FALIDVNGMY…LPVAEVWGVG (186 aa).

It belongs to the DNA polymerase type-Y family.

Its function is as follows. Involved in UV protection and mutation. The polypeptide is Protein MucB (mucB) (Salmonella typhimurium).